Here is a 185-residue protein sequence, read N- to C-terminus: Elongation factor P (185 aa).

The protein belongs to the elongation factor P family.

The protein resides in the cytoplasm. Its pathway is protein biosynthesis; polypeptide chain elongation. Its function is as follows. Involved in peptide bond synthesis. Stimulates efficient translation and peptide-bond synthesis on native or reconstituted 70S ribosomes in vitro. Probably functions indirectly by altering the affinity of the ribosome for aminoacyl-tRNA, thus increasing their reactivity as acceptors for peptidyl transferase. The protein is Elongation factor P of Salinispora tropica (strain ATCC BAA-916 / DSM 44818 / JCM 13857 / NBRC 105044 / CNB-440).